A 180-amino-acid polypeptide reads, in one-letter code: Small ribosomal subunit protein bS21c (180 aa).

Residues 1–79 (MASTSSLLNF…PSLAFSNTLY (79 aa)) constitute a chloroplast transit peptide. A compositionally biased stretch (low complexity) spans 14–45 (LFPSNTSLPPSSNPKFPNPNSLSSQQNSISIS). Disordered regions lie at residues 14-49 (LFPSNTSLPPSSNPKFPNPNSLSSQQNSISISSKKH) and 124-180 (NKQE…GAPF). The segment covering 130–147 (KRKHREAAKRNSRRRRGP) has biased composition (basic residues). Residues 154–166 (GKEEATKVDKKED) show a composition bias toward basic and acidic residues.

As to quaternary structure, component of the chloroplast small ribosomal subunit (SSU). Mature 70S chloroplast ribosomes of higher plants consist of a small (30S) and a large (50S) subunit. The 30S small subunit contains 1 molecule of ribosomal RNA (16S rRNA) and 24 different proteins. The 50S large subunit contains 3 rRNA molecules (23S, 5S and 4.5S rRNA) and 33 different proteins. bS21c binds directly to 16S ribosomal RNA.

The protein resides in the plastid. The protein localises to the chloroplast. Component of the chloroplast ribosome (chloro-ribosome), a dedicated translation machinery responsible for the synthesis of chloroplast genome-encoded proteins, including proteins of the transcription and translation machinery and components of the photosynthetic apparatus. This chain is Small ribosomal subunit protein bS21c (rps21), found in Spinacia oleracea (Spinach).